Reading from the N-terminus, the 427-residue chain is Peptidase B (427 aa).

Residues Lys195 and Asp200 each coordinate Mn(2+). Lys207 is a catalytic residue. Residues Asp218, Asp277, and Glu279 each contribute to the Mn(2+) site. Arg281 is a catalytic residue.

This sequence belongs to the peptidase M17 family. In terms of assembly, homohexamer. The cofactor is Mn(2+).

The protein localises to the cytoplasm. It catalyses the reaction Release of an N-terminal amino acid, Xaa, from a peptide or arylamide. Xaa is preferably Glu or Asp but may be other amino acids, including Leu, Met, His, Cys and Gln.. In terms of biological role, probably plays an important role in intracellular peptide degradation. This chain is Peptidase B, found in Escherichia coli (strain ATCC 8739 / DSM 1576 / NBRC 3972 / NCIMB 8545 / WDCM 00012 / Crooks).